We begin with the raw amino-acid sequence, 224 residues long: Peroxiredoxin-6 (224 aa).

In terms of domain architecture, Thioredoxin spans 5-169 (LLLGDEAPNF…ILRVVDSLQL (165 aa)). Residues 31-40 (DSWGILFSHP) are required and sufficient for targeting to lysosomes and lamellar bodies. T44 is modified (phosphothreonine). Catalysis depends on C47, which acts as the Cysteine sulfenic acid (-SOH) intermediate; for peroxidase activity. Residue K63 is modified to N6-acetyllysine. Residue Y89 is modified to Phosphotyrosine. The active-site For phospholipase activity is the D140. At T177 the chain carries Phosphothreonine; by MAPK. K209 carries the post-translational modification N6-acetyllysine; alternate. K209 is modified (N6-succinyllysine; alternate).

It belongs to the peroxiredoxin family. Prx6 subfamily. As to quaternary structure, homodimer. Interacts with GSTP1; mediates PRDX6 glutathionylation and regeneration. Interacts with APEX1. Interacts with STH. May interact with FAM168B. May interact with HTR2A. In terms of processing, phosphorylation at Thr-177 by MAP kinases increases the phospholipase activity of the enzyme. Phosphorylated form exhibits a greater lysophosphatidylcholine acyltransferase activity compared to the non-phosphorylated form. Irreversibly inactivated by overoxidation of Cys-47 to sulfinic acid (Cys-SO(2)H) and sulfonic acid (Cys-SO(3)H) forms upon oxidative stress.

It localises to the cytoplasm. Its subcellular location is the lysosome. The enzyme catalyses a hydroperoxide + 2 glutathione = an alcohol + glutathione disulfide + H2O. It carries out the reaction a 1,2-diacyl-sn-glycero-3-phosphocholine + H2O = a 1-acyl-sn-glycero-3-phosphocholine + a fatty acid + H(+). It catalyses the reaction a 1-acyl-sn-glycero-3-phosphocholine + an acyl-CoA = a 1,2-diacyl-sn-glycero-3-phosphocholine + CoA. The catalysed reaction is 1-hexadecanoyl-sn-glycero-3-phosphocholine + hexadecanoyl-CoA = 1,2-dihexadecanoyl-sn-glycero-3-phosphocholine + CoA. The enzyme catalyses 1,2-dihexadecanoyl-sn-glycero-3-phosphocholine + H2O = 1-hexadecanoyl-sn-glycero-3-phosphocholine + hexadecanoate + H(+). Functionally, thiol-specific peroxidase that catalyzes the reduction of hydrogen peroxide and organic hydroperoxides to water and alcohols, respectively. Can reduce H(2)O(2) and short chain organic, fatty acid, and phospholipid hydroperoxides. Also has phospholipase activity, can therefore either reduce the oxidized sn-2 fatty acyl group of phospholipids (peroxidase activity) or hydrolyze the sn-2 ester bond of phospholipids (phospholipase activity). These activities are dependent on binding to phospholipids at acidic pH and to oxidized phospholipds at cytosolic pH. Plays a role in cell protection against oxidative stress by detoxifying peroxides and in phospholipid homeostasis. Exhibits acyl-CoA-dependent lysophospholipid acyltransferase which mediates the conversion of lysophosphatidylcholine (1-acyl-sn-glycero-3-phosphocholine or LPC) into phosphatidylcholine (1,2-diacyl-sn-glycero-3-phosphocholine or PC). Shows a clear preference for LPC as the lysophospholipid and for palmitoyl CoA as the fatty acyl substrate. In Rattus norvegicus (Rat), this protein is Peroxiredoxin-6 (Prdx6).